A 166-amino-acid polypeptide reads, in one-letter code: 2-C-methyl-D-erythritol 2,4-cyclodiphosphate synthase (166 aa).

A divalent metal cation-binding residues include Asp-15 and His-17. 4-CDP-2-C-methyl-D-erythritol 2-phosphate is bound by residues 15–17 and 43–44; these read DVH and HS. A divalent metal cation is bound at residue His-51. Residues 65–67, 141–144, and Arg-151 each bind 4-CDP-2-C-methyl-D-erythritol 2-phosphate; these read DIG and TTNE.

This sequence belongs to the IspF family. Homotrimer. A divalent metal cation serves as cofactor.

The enzyme catalyses 4-CDP-2-C-methyl-D-erythritol 2-phosphate = 2-C-methyl-D-erythritol 2,4-cyclic diphosphate + CMP. The protein operates within isoprenoid biosynthesis; isopentenyl diphosphate biosynthesis via DXP pathway; isopentenyl diphosphate from 1-deoxy-D-xylulose 5-phosphate: step 4/6. Functionally, involved in the biosynthesis of isopentenyl diphosphate (IPP) and dimethylallyl diphosphate (DMAPP), two major building blocks of isoprenoid compounds. Catalyzes the conversion of 4-diphosphocytidyl-2-C-methyl-D-erythritol 2-phosphate (CDP-ME2P) to 2-C-methyl-D-erythritol 2,4-cyclodiphosphate (ME-CPP) with a corresponding release of cytidine 5-monophosphate (CMP). This Synechococcus sp. (strain CC9311) protein is 2-C-methyl-D-erythritol 2,4-cyclodiphosphate synthase.